The following is a 916-amino-acid chain: Protein translocase subunit SecA (916 aa).

ATP-binding positions include Gln-87, 105–109 (GEGKT), and Asp-512. A disordered region spans residues 857–916 (QHAEAPSMEQAVAGEEEELPEGPAPVVPLEPVRNEQKIGRNEPCPCGSGKKYKHCHGQLD). 4 residues coordinate Zn(2+): Cys-900, Cys-902, Cys-911, and His-912. Residues 906–916 (KKYKHCHGQLD) are compositionally biased toward basic residues.

This sequence belongs to the SecA family. In terms of assembly, monomer and homodimer. Part of the essential Sec protein translocation apparatus which comprises SecA, SecYEG and auxiliary proteins SecDF-YajC and YidC. It depends on Zn(2+) as a cofactor.

It localises to the cell inner membrane. It is found in the cytoplasm. It catalyses the reaction ATP + H2O + cellular proteinSide 1 = ADP + phosphate + cellular proteinSide 2.. Its function is as follows. Part of the Sec protein translocase complex. Interacts with the SecYEG preprotein conducting channel. Has a central role in coupling the hydrolysis of ATP to the transfer of proteins into and across the cell membrane, serving both as a receptor for the preprotein-SecB complex and as an ATP-driven molecular motor driving the stepwise translocation of polypeptide chains across the membrane. This is Protein translocase subunit SecA from Pseudomonas aeruginosa (strain LESB58).